Here is a 175-residue protein sequence, read N- to C-terminus: Large ribosomal subunit protein uL10 (175 aa).

This sequence belongs to the universal ribosomal protein uL10 family. As to quaternary structure, part of the ribosomal stalk of the 50S ribosomal subunit. The N-terminus interacts with L11 and the large rRNA to form the base of the stalk. The C-terminus forms an elongated spine to which L12 dimers bind in a sequential fashion forming a multimeric L10(L12)X complex.

Forms part of the ribosomal stalk, playing a central role in the interaction of the ribosome with GTP-bound translation factors. The chain is Large ribosomal subunit protein uL10 from Picosynechococcus sp. (strain ATCC 27264 / PCC 7002 / PR-6) (Agmenellum quadruplicatum).